The sequence spans 363 residues: Capsid protein (363 aa).

Residues 72–111 (KKVEELNESLKAAILAGAEAEDLRNKLKDISQRYASQLEI) adopt a coiled-coil conformation. The tract at residues 122 to 144 (LKKKGHEQPLTGSGSSEPVHAES) is disordered.

The protein resides in the virion. This is Capsid protein from Citrus leaf blotch virus (isolate Nagami kumquat/France/SRA-153/1984) (CLBV).